We begin with the raw amino-acid sequence, 203 residues long: Small ribosomal subunit protein eS1 (203 aa).

It belongs to the eukaryotic ribosomal protein eS1 family.

The protein is Small ribosomal subunit protein eS1 of Methanosarcina acetivorans (strain ATCC 35395 / DSM 2834 / JCM 12185 / C2A).